We begin with the raw amino-acid sequence, 323 residues long: tRNA dimethylallyltransferase (323 aa).

12 to 19 (GPTAAGKT) serves as a coordination point for ATP. 14-19 (TAAGKT) contributes to the substrate binding site. Interaction with substrate tRNA stretches follow at residues 37–40 (DSAL) and 161–165 (QRLMR).

The protein belongs to the IPP transferase family. In terms of assembly, monomer. Requires Mg(2+) as cofactor.

The catalysed reaction is adenosine(37) in tRNA + dimethylallyl diphosphate = N(6)-dimethylallyladenosine(37) in tRNA + diphosphate. Its function is as follows. Catalyzes the transfer of a dimethylallyl group onto the adenine at position 37 in tRNAs that read codons beginning with uridine, leading to the formation of N6-(dimethylallyl)adenosine (i(6)A). This is tRNA dimethylallyltransferase from Pseudomonas paraeruginosa (strain DSM 24068 / PA7) (Pseudomonas aeruginosa (strain PA7)).